Reading from the N-terminus, the 478-residue chain is Proline--tRNA ligase (478 aa).

The protein belongs to the class-II aminoacyl-tRNA synthetase family. ProS type 3 subfamily. Homodimer.

The protein resides in the cytoplasm. It catalyses the reaction tRNA(Pro) + L-proline + ATP = L-prolyl-tRNA(Pro) + AMP + diphosphate. Its function is as follows. Catalyzes the attachment of proline to tRNA(Pro) in a two-step reaction: proline is first activated by ATP to form Pro-AMP and then transferred to the acceptor end of tRNA(Pro). This is Proline--tRNA ligase from Clostridium botulinum (strain Okra / Type B1).